We begin with the raw amino-acid sequence, 257 residues long: Electron transfer flavoprotein subunit beta (257 aa).

It belongs to the ETF beta-subunit/FixA family. As to quaternary structure, heterodimer of an alpha and a beta subunit. The cofactor is FAD. It depends on AMP as a cofactor.

Functionally, the electron transfer flavoprotein serves as a specific electron acceptor for other dehydrogenases. It transfers the electrons to the main respiratory chain via ETF-ubiquinone oxidoreductase (ETF dehydrogenase). This is Electron transfer flavoprotein subunit beta (etfB) from Bacillus subtilis (strain 168).